The primary structure comprises 203 residues: RNA chaperone ProQ (203 aa).

A disordered region spans residues 111-138; the sequence is KAKRQALAPKKPAKKVAPKRAPAVKKER.

This sequence belongs to the ProQ family.

Its subcellular location is the cytoplasm. Functionally, RNA chaperone with significant RNA binding, RNA strand exchange and RNA duplexing activities. The sequence is that of RNA chaperone ProQ from Shewanella frigidimarina (strain NCIMB 400).